The primary structure comprises 871 residues: DNA mismatch repair protein MutS (871 aa).

ATP is bound at residue 616-623 (GPNMAGKS). A disordered region spans residues 801-825 (ETEKTEESMEGTNLPKKKKEEKTSS).

The protein belongs to the DNA mismatch repair MutS family.

Functionally, this protein is involved in the repair of mismatches in DNA. It is possible that it carries out the mismatch recognition step. This protein has a weak ATPase activity. The sequence is that of DNA mismatch repair protein MutS from Clostridium kluyveri (strain NBRC 12016).